The following is a 353-amino-acid chain: MACCLSEEAKEQKRINQEIERQLRKDKRDARRELKLLLLGTGESGKSTFIKQMRIIHGAGYSDEDKRGFIKLVFQNIFMAMQSMIRAMDLLQISYGDSANIEHADLVRSVDYESVTTFEEPYVTAMNSLWQDTGIQHCYDRRREYQLTDSAKYYLTDLDRIAAKDYVSTLQDILRVRAPTTGIIEYPFDLEEIRFRMVDVGGQRSERRKWIHCFENVTSIIFLVALSEYDQILFESDNENRMEESKALFKTIITYPWFQHSSVILFLNKKDLLEEKIMYSHLVDYFPEYDGPRKDAIAAREFILRMFVELNPDPEKIIYSHFTCATDTENIRFVFAAVKDTILQLNLKEYNLV.

Residues Cys3 and Cys4 are each lipidated (S-palmitoyl cysteine). Residues 32-353 enclose the G-alpha domain; the sequence is RELKLLLLGT…QLNLKEYNLV (322 aa). Residues 35 to 48 are G1 motif; that stretch reads KLLLLGTGESGKST. GTP-binding positions include 40-47, 174-180, 199-203, 268-271, and Ala325; these read GTGESGKS, LRVRAPT, DVGGQ, and NKKD. Ser47 and Thr180 together coordinate Mg(2+). Positions 172 to 180 are G2 motif; the sequence is DILRVRAPT. The G3 motif stretch occupies residues 195–204; that stretch reads FRMVDVGGQR. Positions 264–271 are G4 motif; sequence ILFLNKKD. The tract at residues 323–328 is G5 motif; it reads TCATDT.

It belongs to the G-alpha family. G(q) subfamily. G proteins are composed of 3 units; alpha, beta and gamma. The alpha chain contains the guanine nucleotide binding site.

Its function is as follows. Guanine nucleotide-binding proteins (G proteins) are involved as modulators or transducers in various transmembrane signaling systems. In Homarus americanus (American lobster), this protein is Guanine nucleotide-binding protein G(q) subunit alpha.